The chain runs to 390 residues: Serpin B3 (390 aa).

M1 carries the post-translational modification N-acetylmethionine.

It belongs to the serpin family. Ov-serpin subfamily. As to quaternary structure, interacts with MAPK8/JNK1. In terms of tissue distribution, squamous cells. Expressed in some hepatocellular carcinoma (at protein level).

The protein localises to the cytoplasm. Its function is as follows. May act as a papain-like cysteine protease inhibitor to modulate the host immune response against tumor cells. Also functions as an inhibitor of UV-induced apoptosis via suppression of the activity of c-Jun NH(2)-terminal kinase (JNK1). This is Serpin B3 (SERPINB3) from Homo sapiens (Human).